We begin with the raw amino-acid sequence, 237 residues long: Large ribosomal subunit protein uL2 (237 aa).

A compositionally biased stretch (polar residues) spans 1-11 (MGKRIISQNRG). 2 disordered regions span residues 1–20 (MGKR…YRAP) and 201–237 (FGGG…GVRR).

The protein belongs to the universal ribosomal protein uL2 family. Part of the 50S ribosomal subunit. Forms a bridge to the 30S subunit in the 70S ribosome.

In terms of biological role, one of the primary rRNA binding proteins. Required for association of the 30S and 50S subunits to form the 70S ribosome, for tRNA binding and peptide bond formation. It has been suggested to have peptidyltransferase activity; this is somewhat controversial. Makes several contacts with the 16S rRNA in the 70S ribosome. In Archaeoglobus fulgidus (strain ATCC 49558 / DSM 4304 / JCM 9628 / NBRC 100126 / VC-16), this protein is Large ribosomal subunit protein uL2.